Reading from the N-terminus, the 68-residue chain is Conotoxin Em11.5 (68 aa).

A signal peptide spans 1–26 (MMFRLTSVGCFLLVIACLNLFQVVLT). Disulfide bonds link Cys29–Cys43, Cys36–Cys48, Cys42–Cys52, and Cys47–Cys56. Residue Phe60 is modified to Phenylalanine amide. The propeptide occupies 64–68 (ATFQE).

Belongs to the conotoxin I2 superfamily. Expressed by the venom duct.

The protein localises to the secreted. This chain is Conotoxin Em11.5, found in Conus emaciatus (False virgin cone).